The sequence spans 4910 residues: Midasin (4910 aa).

AAA-ATPase protomer regions lie at residues isoleucine 305–phenylalanine 528 and methionine 636–isoleucine 975. ATP-binding positions include glycine 315–threonine 322 and glycine 653–threonine 660. The segment at valine 695 to isoleucine 803 is interaction with RIX1. Threonine 1026 carries the post-translational modification Phosphothreonine. 4 AAA-ATPase protomer regions span residues histidine 1054 to arginine 1280, lysine 1345 to isoleucine 1624, arginine 1732 to isoleucine 1985, and valine 2036 to histidine 2286. ATP is bound by residues glycine 1083 to threonine 1090, glycine 1368 to threonine 1375, glycine 1747 to threonine 1754, and glycine 2054 to threonine 2061. Residues glutamate 2372 to lysine 4075 are linker. A Phosphoserine modification is found at serine 2971. Disordered stretches follow at residues serine 4045–aspartate 4547, serine 4555–isoleucine 4574, and serine 4579–serine 4600. The segment covering glutamate 4078 to glutamine 4088 has biased composition (acidic residues). The span at asparagine 4089–aspartate 4098 shows a compositional bias: basic and acidic residues. The segment covering glutamate 4099–alanine 4154 has biased composition (acidic residues). Over residues isoleucine 4155–aspartate 4174 the composition is skewed to basic and acidic residues. 3 stretches are compositionally biased toward acidic residues: residues glycine 4202–glutamate 4244, glutamate 4251–methionine 4274, and glycine 4288–leucine 4358. Position 4353 is a phosphoserine (serine 4353). Basic and acidic residues predominate over residues lysine 4359–glycine 4372. Threonine 4388 carries the post-translational modification Phosphothreonine. 2 stretches are compositionally biased toward basic and acidic residues: residues aspartate 4435–alanine 4447 and leucine 4481–glutamate 4495. A compositionally biased stretch (polar residues) spans asparagine 4498 to threonine 4516. Residues isoleucine 4517 to glutamate 4531 show a composition bias toward acidic residues. Serine 4555 carries the post-translational modification Phosphoserine. The span at isoleucine 4557 to lysine 4570 shows a compositional bias: basic and acidic residues. The VWFA domain maps to glutamine 4704 to isoleucine 4899.

This sequence belongs to the midasin family. Associates with pre-60S ribosomes in the nucleoplasm. Interacts (via its hexameric AAA ATPase ring) with the RIX1 complex (via RIX1); this interaction is crucial for recruitment of MDN1 to the pre-ribosomal particle. Interacts (via VWFA/MIDAS domain) with YTM1 (via UBL domain). Interacts (via VWFA/MIDAS domain) with RSA4 (via UBL domain).

It localises to the nucleus. Its subcellular location is the nucleolus. The protein localises to the nucleoplasm. In terms of biological role, nuclear chaperone required for maturation and nuclear export of pre-60S ribosome subunits. Functions at successive maturation steps to remove ribosomal factors at critical transition points, first driving the exit of early pre-60S particles from the nucleolus and then driving late pre-60S particles from the nucleus. At an early stage in 60S maturation, mediates the dissociation of the NOP7 complex (YTM1-ERB1-NOP7) from early pre-60S particles, rendering them competent for export from the nucleolus to the nucleoplasm. Subsequently recruited to the nucleoplasmic particles through interaction with the RIX1 complex. This binding is only possible if the 5S RNP at the central protuberance has undergone the rotation to complete its maturation. After remodeling, removes the ribosome biogenesis factor RSA4 in an ATP hydrolysis-driven step from pre-60S ribosomal subunits, rendering them competent for export from the nucleoplasm to the cytoplasm. Activates the GTPase activity of NOG2, which disengages from the pre-60S particle upon GTP hydrolysis, thus freeing its binding site for the nuclear export factor NMD3. In Saccharomyces cerevisiae (strain ATCC 204508 / S288c) (Baker's yeast), this protein is Midasin (MDN1).